Consider the following 82-residue polypeptide: Protein costars (82 aa).

Belongs to the costars family.

Functionally, modulates actin dynamics and cell motility. The chain is Protein costars (cosA) from Dictyostelium discoideum (Social amoeba).